The sequence spans 476 residues: Glutamyl-tRNA(Gln) amidotransferase subunit A (476 aa).

Residues Lys77 and Ser152 each act as charge relay system in the active site. Ser176 (acyl-ester intermediate) is an active-site residue.

This sequence belongs to the amidase family. GatA subfamily. As to quaternary structure, heterotrimer of A, B and C subunits.

The catalysed reaction is L-glutamyl-tRNA(Gln) + L-glutamine + ATP + H2O = L-glutaminyl-tRNA(Gln) + L-glutamate + ADP + phosphate + H(+). Allows the formation of correctly charged Gln-tRNA(Gln) through the transamidation of misacylated Glu-tRNA(Gln) in organisms which lack glutaminyl-tRNA synthetase. The reaction takes place in the presence of glutamine and ATP through an activated gamma-phospho-Glu-tRNA(Gln). The polypeptide is Glutamyl-tRNA(Gln) amidotransferase subunit A (Acidobacterium capsulatum (strain ATCC 51196 / DSM 11244 / BCRC 80197 / JCM 7670 / NBRC 15755 / NCIMB 13165 / 161)).